Here is a 239-residue protein sequence, read N- to C-terminus: tRNA (guanine-N(7)-)-methyltransferase (239 aa).

Residues glutamate 69, glutamate 94, aspartate 121, and aspartate 144 each coordinate S-adenosyl-L-methionine. Residue aspartate 144 is part of the active site. Substrate contacts are provided by residues lysine 148, aspartate 180, and 217–220 (TNFE).

This sequence belongs to the class I-like SAM-binding methyltransferase superfamily. TrmB family. Monomer.

It catalyses the reaction guanosine(46) in tRNA + S-adenosyl-L-methionine = N(7)-methylguanosine(46) in tRNA + S-adenosyl-L-homocysteine. It functions in the pathway tRNA modification; N(7)-methylguanine-tRNA biosynthesis. In terms of biological role, catalyzes the formation of N(7)-methylguanine at position 46 (m7G46) in tRNA. In Buchnera aphidicola subsp. Schizaphis graminum (strain Sg), this protein is tRNA (guanine-N(7)-)-methyltransferase.